The sequence spans 505 residues: N-succinylglutamate 5-semialdehyde dehydrogenase (505 aa).

234 to 239 (GSAHTG) contributes to the NAD(+) binding site. Catalysis depends on residues E257 and C291.

This sequence belongs to the aldehyde dehydrogenase family. AstD subfamily.

It carries out the reaction N-succinyl-L-glutamate 5-semialdehyde + NAD(+) + H2O = N-succinyl-L-glutamate + NADH + 2 H(+). It functions in the pathway amino-acid degradation; L-arginine degradation via AST pathway; L-glutamate and succinate from L-arginine: step 4/5. Its function is as follows. Catalyzes the NAD-dependent reduction of succinylglutamate semialdehyde into succinylglutamate. This is N-succinylglutamate 5-semialdehyde dehydrogenase from Yersinia pestis bv. Antiqua (strain Antiqua).